We begin with the raw amino-acid sequence, 775 residues long: MVYAHNLGFPRIGIKREMKKTVEAYWRGEISQQQLQQQAIELQLTNWKIQAEAGVDLIPVGDFSWYDHVLDMAVRVGAIPSRFKALNSNITDTMFCMARGQAPNGIETSACEMTKWFDTNYHYIVPEFTTNQSFELHHDDLFKSTKLALENNYRAKPVILGPLSFLWLGKCKGESFNKLLLLEKLLPVYAEIFEQLSSLGVEWVQVDEPILVLDLPPEWQQAFLTTYQQLNFFNLKCLLATYFGSLDDNLSLTCQLPVDGLHIDYCRAPDQLDSVLSQLPAEKILSVGIIDGRNIWCNDLNRSLTLLENIQSSLGDRLWVAPSCSLLHVPIDLDQENKLDVELKSWFAFAKQKVAEAAFLTRGLREGRESIGAELKKNEEVIISRKTSKRIHNPNVEKKAASVTERLMRRQHEHSIRKNKQTAQLNLPLFPTTTIGSFPQTSQIRCLRRDYKQGKIDDALYEEKIRQEIAEVIGIQVKLGLDVLVHGELERNDMVEYFGELLDGIAITSNGWVQSYGSRCVKPPIIFGDVSRERPMTLRWIEYAQSLTTKSVKGMLTGPVTILAWSFVRDDQPRSQTAKQIALALRDEVQDLERSGVRVIQIDEPAFRECLPLRKAAWQDYLEWAVKCFRLASCGVKDETQIHTHMCYSEFNDIIEAIAALDADVITIESSRSEMEILKSFEKFAYPNDIGPGIYDIHSPRIPRVAEIEELAVRALQYIPIERLWINPDCGLKTRNWEETKEALSRMVDAAKHLRKAFSSEKTPTIDLELQPAST.

Residues 16–19 (REMK) and K115 contribute to the 5-methyltetrahydropteroyltri-L-glutamate site. L-homocysteine-binding positions include 435 to 437 (IGS) and E488. L-methionine is bound by residues 435 to 437 (IGS) and E488. 5-methyltetrahydropteroyltri-L-glutamate-binding positions include 519 to 520 (RC) and W565. D603 lines the L-homocysteine pocket. L-methionine is bound at residue D603. E609 provides a ligand contact to 5-methyltetrahydropteroyltri-L-glutamate. Residues H645, C647, and E669 each contribute to the Zn(2+) site. Residue H698 is the Proton donor of the active site. Position 730 (C730) interacts with Zn(2+).

Belongs to the vitamin-B12 independent methionine synthase family. It depends on Zn(2+) as a cofactor.

The enzyme catalyses 5-methyltetrahydropteroyltri-L-glutamate + L-homocysteine = tetrahydropteroyltri-L-glutamate + L-methionine. Its pathway is amino-acid biosynthesis; L-methionine biosynthesis via de novo pathway; L-methionine from L-homocysteine (MetE route): step 1/1. Functionally, catalyzes the transfer of a methyl group from 5-methyltetrahydrofolate to homocysteine resulting in methionine formation. This Coxiella burnetii (strain RSA 331 / Henzerling II) protein is 5-methyltetrahydropteroyltriglutamate--homocysteine methyltransferase.